Reading from the N-terminus, the 274-residue chain is SWI/SNF chromatin-remodeling complex subunit snf30 (274 aa).

Polar residues-rich tracts occupy residues 123–150 (TLSY…GTMQ) and 157–167 (PSLTRSDSVSS). Positions 123–167 (TLSYPPSNGDSSSYANGTDLHGNTGTMQQEEKANPSLTRSDSVSS) are disordered.

In terms of assembly, component of the SWI/SNF global transcription activator complex composed of at least arp9, arp42, snf5, snf22, snf30, sbf59, sol1, ssr1, ssr2, ssr3, ssr4 and tfg3.

The protein localises to the cytoplasm. The protein resides in the nucleus. Its function is as follows. Component of the SWI/SNF complex, an ATP-dependent chromatin remodeling complex, required for the positive and negative regulation of gene expression of a large number of genes. It changes chromatin structure by altering DNA-histone contacts within a nucleosome, leading eventually to a change in nucleosome position, thus facilitating or repressing binding of gene-specific transcription factors. In Schizosaccharomyces pombe (strain 972 / ATCC 24843) (Fission yeast), this protein is SWI/SNF chromatin-remodeling complex subunit snf30 (snf30).